The chain runs to 392 residues: UDP-N-acetylglucosamine--N-acetylmuramyl-(pentapeptide) pyrophosphoryl-undecaprenol N-acetylglucosamine transferase (392 aa).

UDP-N-acetyl-alpha-D-glucosamine-binding positions include Thr-14–Gly-16, Asn-124, Arg-167, Ser-195, Ile-251, and Gln-296.

The protein belongs to the glycosyltransferase 28 family. MurG subfamily.

The protein localises to the cell inner membrane. It carries out the reaction di-trans,octa-cis-undecaprenyl diphospho-N-acetyl-alpha-D-muramoyl-L-alanyl-D-glutamyl-meso-2,6-diaminopimeloyl-D-alanyl-D-alanine + UDP-N-acetyl-alpha-D-glucosamine = di-trans,octa-cis-undecaprenyl diphospho-[N-acetyl-alpha-D-glucosaminyl-(1-&gt;4)]-N-acetyl-alpha-D-muramoyl-L-alanyl-D-glutamyl-meso-2,6-diaminopimeloyl-D-alanyl-D-alanine + UDP + H(+). Its pathway is cell wall biogenesis; peptidoglycan biosynthesis. Functionally, cell wall formation. Catalyzes the transfer of a GlcNAc subunit on undecaprenyl-pyrophosphoryl-MurNAc-pentapeptide (lipid intermediate I) to form undecaprenyl-pyrophosphoryl-MurNAc-(pentapeptide)GlcNAc (lipid intermediate II). This is UDP-N-acetylglucosamine--N-acetylmuramyl-(pentapeptide) pyrophosphoryl-undecaprenol N-acetylglucosamine transferase from Sphingopyxis alaskensis (strain DSM 13593 / LMG 18877 / RB2256) (Sphingomonas alaskensis).